Reading from the N-terminus, the 598-residue chain is Beta-hexosaminidase A (598 aa).

A signal peptide spans 1–11; sequence MSFITSAHATA. Residue aspartate 305 is part of the active site.

This sequence belongs to the glycosyl hydrolase 3 family.

The enzyme catalyses Hydrolysis of terminal non-reducing N-acetyl-D-hexosamine residues in N-acetyl-beta-D-hexosaminides.. Its function is as follows. Most active towards p-nitrophenyl-N-acetyl-beta-D-glucosaminide(PNP-beta-GlcNAc) and diacetylchitobiose. The protein is Beta-hexosaminidase A (cht60) of Pseudoalteromonas piscicida.